A 1852-amino-acid chain; its full sequence is Chitin synthase csmA (1852 aa).

The tract at residues 1–20 is disordered; sequence MVGTLPAGHTPSHVQSSLPS. The Myosin motor domain maps to 1-787; the sequence is MVGTLPAGHT…CWADLAKVGE (787 aa). A glycan (N-linked (GlcNAc...) asparagine) is linked at asparagine 58. Residue 102–109 participates in ATP binding; it reads GESGAGKT. A disordered region spans residues 599–646; it reads SSKPLRMPSMARRKTSPASRLTFDATPAEDPYETESQTGSSAKNSSAK. N-linked (GlcNAc...) asparagine glycosylation occurs at asparagine 642. Residues 667-691 form an actin-binding region; sequence LDIVNKCLTSGNLNPYFVFCLKPND. An N-linked (GlcNAc...) asparagine glycan is attached at asparagine 840. 2 consecutive transmembrane segments (helical) span residues 895–915 and 930–950; these read WMAI…RYIG and FAIN…IVGF. One can recognise a Cytochrome b5 heme-binding domain in the interval 958-1017; that stretch reads QHVYSPAELSSHDGKDGHSSYTSIRGLVLDLGEFMDSHYPGIVPDSALKKYAGVDSTALF. Residues asparagine 1044 and asparagine 1195 are each glycosylated (N-linked (GlcNAc...) asparagine). The chain crosses the membrane as a helical span at residues 1205-1225; sequence FILAISVLICSVIVFKFFAAL. N-linked (GlcNAc...) asparagine glycans are attached at residues asparagine 1428, asparagine 1462, and asparagine 1568. 3 helical membrane-spanning segments follow: residues 1600 to 1620, 1626 to 1646, and 1653 to 1673; these read ISTI…VWLV, IPWT…IIFI, and MIGW…ALPL. The DEK-C domain maps to 1794 to 1849; the sequence is LPSDDAILSEIRDILRTADLMTVTKKNIKQELERRFGVNLDAKRPYINSATEAVLS.

The protein in the N-terminal section; belongs to the TRAFAC class myosin-kinesin ATPase superfamily. Myosin family. It in the C-terminal section; belongs to the chitin synthase family. Class V subfamily. In terms of assembly, binds F-actin via its N-terminal myosin motor-like domain (MMD). Interacts with kibesin kinA.

It is found in the cell membrane. It localises to the cell septum. The protein resides in the cell tip. It catalyses the reaction [(1-&gt;4)-N-acetyl-beta-D-glucosaminyl](n) + UDP-N-acetyl-alpha-D-glucosamine = [(1-&gt;4)-N-acetyl-beta-D-glucosaminyl](n+1) + UDP + H(+). In terms of biological role, polymerizes chitin, a structural polymer of the cell wall and septum, by transferring the sugar moiety of UDP-GlcNAc to the non-reducing end of the growing chitin polymer. Plays an important role in polarized hyphal cell wall synthesis and maintenance of cell wall integrity. Its role in growth and morphogenesis is particularly important under low osmotic conditions. In Emericella nidulans (Aspergillus nidulans), this protein is Chitin synthase csmA.